The chain runs to 693 residues: Polyribonucleotide nucleotidyltransferase (693 aa).

Asp-486 and Asp-492 together coordinate Mg(2+). Residues 553–612 enclose the KH domain; it reads PRIHTIKINPEKIKDVIGKGGSVIRMLTEETGTTIEIEDDGTVKISAVMQEKAKCAIQRI. The S1 motif domain maps to 622–690; sequence GSVYTGKVTR…RQGRLRLSIK (69 aa).

This sequence belongs to the polyribonucleotide nucleotidyltransferase family. As to quaternary structure, component of the RNA degradosome, which is a multiprotein complex involved in RNA processing and mRNA degradation. Mg(2+) is required as a cofactor.

Its subcellular location is the cytoplasm. It carries out the reaction RNA(n+1) + phosphate = RNA(n) + a ribonucleoside 5'-diphosphate. Involved in mRNA degradation. Catalyzes the phosphorolysis of single-stranded polyribonucleotides processively in the 3'- to 5'-direction. The sequence is that of Polyribonucleotide nucleotidyltransferase from Buchnera aphidicola subsp. Baizongia pistaciae (strain Bp).